Reading from the N-terminus, the 597-residue chain is Membrane protein insertase YidC (597 aa).

The helical transmembrane segment at 8–28 (YFVAIALSVLILIAWQFFYVS) threads the bilayer. The interval 38–75 (AEKAQQAQSQPGTQQAAPGQAAPGQALPGGAIPSAAES) is disordered. The segment covering 41 to 70 (AQQAQSQPGTQQAAPGQAAPGQALPGGAIP) has biased composition (low complexity). Transmembrane regions (helical) follow at residues 372–392 (LFGN…LIFF), 446–466 (WPIL…YVTI), 491–511 (LFGL…WPIV), and 535–555 (FTWM…GLVI).

This sequence belongs to the OXA1/ALB3/YidC family. Type 1 subfamily. Interacts with the Sec translocase complex via SecD. Specifically interacts with transmembrane segments of nascent integral membrane proteins during membrane integration.

The protein localises to the cell inner membrane. Required for the insertion and/or proper folding and/or complex formation of integral membrane proteins into the membrane. Involved in integration of membrane proteins that insert both dependently and independently of the Sec translocase complex, as well as at least some lipoproteins. Aids folding of multispanning membrane proteins. The chain is Membrane protein insertase YidC from Sinorhizobium medicae (strain WSM419) (Ensifer medicae).